A 1357-amino-acid chain; its full sequence is MAYSYTEKKRIRKDFSKLPDVMDVPYLLAIQLDSYREFLQAGATKDQFRDVGLHAAFKSVFPIISYSGNAALEYVGYRLGEPAFDVKECVLRGVTYAVPLRVKVRLIIFDKESSNKAIKDIKEQEVYMGEIPLMTENGTFVINGTERVIVSQLHRSPGVFFDHDRGKTHSSGKLLYSARIIPYRGSWLDFEFDPKDCVFVRIDRRRKLPASVLLRALGYTTEEVLDAFYTTNVFHVKGESLSLELVPQRLRGEIAVLDIQDDKGKVIVEQGRRITARHINQLEKAGIKELDVPLDYVLGRTTAKAIVHPATGEILAECNTELNTEILAKIAKAQVVRIETLYTNDIDCGPFVSDTLKIDSTSNQLEALVEIYRMMRPGEPPTKDAAETLFNNLFFSPERYDLSAVGRMKFNRRIGRTEIEGSGVLCKEDIVAVLKTLVDIRNGKGIVDDIDHLGNRRVRCVGEMAENQFRVGLVRVERAVKERLSMAESEGLMPQDLINAKPVAAAVKEFFGSSQLSQFMDQNNPLSEITHKRRVSALGPGGLTRERAGFEVRDVHPTHYGRVCPIETPEGPNIGLINSLAAYARTNQYGFLESPYRVVKDALVTDEIVFLSAIEEADHVIAQASATMNDKGQLVDELVAVRHLNEFTVKAPEDVTLMDVSPKQVVSVAASLIPFLEHDDANRALMGSNMQRQAVPTLRADKPLVGTGMERNVARDSGVCVVARRGGVIDSVDASRIVVRVADDEVETGEAGVDIYNLTKYTRSNQNTCINQRPLVSKGDRVQRSDIMADGPSTDMGELALGQNMRIAFMAWNGFNFEDSICLSERVVQEDRFTTIHIQELTCVARDTKLGPEEITADIPNVGEAALNKLDEAGIVYVGAEVGAGDILVGKVTPKGETQLTPEEKLLRAIFGEKASDVKDTSLRVPTGTKGTVIDVQVFTRDGVERDARALSIEKSQLDEIRKDLNEEFRIVEGATFERLRSALVGHKAEGGAGLKKGQEITDEVLDGLEHGQWFKLRMAEDALNEQLEKAQAYIVDRRRLLDDKFEDKKRKLQQGDDLAPGVLKIVKVYLAIRRRIQPGDKMAGRHGNKGVVSVIMPVEDMPHDANGTPVDVVLNPLGVPSRMNVGQILETHLGLAAKGLGEKINRMVEEQRKVAELRTFLDEIYNQIGGRNEDLDSFSDQEILDLANNLRGGVPMATPVFDGAKESEIKAMLKLADLPESGQMQLTDGRTGNKFERPVTVGYMYMLKLNHLVDDKMHARSTGSYSLVTQQPLGGKAQFGGQRFGEMEVWALEAYGAAYTLQEMLTVKSDDVNGRTKMYKNIVDGDHRMEPGMPESFNVLIKEIRSLGIDIDLETE.

The protein belongs to the RNA polymerase beta chain family. The RNAP catalytic core consists of 2 alpha, 1 beta, 1 beta' and 1 omega subunit. When a sigma factor is associated with the core the holoenzyme is formed, which can initiate transcription.

It carries out the reaction RNA(n) + a ribonucleoside 5'-triphosphate = RNA(n+1) + diphosphate. Functionally, DNA-dependent RNA polymerase catalyzes the transcription of DNA into RNA using the four ribonucleoside triphosphates as substrates. This Pseudomonas fluorescens (strain ATCC BAA-477 / NRRL B-23932 / Pf-5) protein is DNA-directed RNA polymerase subunit beta.